The following is a 143-amino-acid chain: Ribonuclease HI (143 aa).

The RNase H type-1 domain maps to 1–136; that stretch reads MQEIEIFCDG…CDSLAKLEAQ (136 aa). Residues D9, E47, D69, and D128 each coordinate Mg(2+).

This sequence belongs to the RNase H family. In terms of assembly, monomer. Requires Mg(2+) as cofactor.

The protein resides in the cytoplasm. It carries out the reaction Endonucleolytic cleavage to 5'-phosphomonoester.. In terms of biological role, endonuclease that specifically degrades the RNA of RNA-DNA hybrids. This is Ribonuclease HI (rnhA) from Helicobacter pylori (strain ATCC 700392 / 26695) (Campylobacter pylori).